The sequence spans 189 residues: Large ribosomal subunit protein bL12c (189 aa).

Disordered regions lie at residues 1–30 and 165–189; these read MAAT…HPQP and EGVS…VSIV. The transit peptide at 1–56 directs the protein to the chloroplast; that stretch reads MAATTTMATLNLPSLTSHPNSSTFPKHPQPLQFPFRTTTNPISLSSTRTTRLRPIA. The span at 11–24 shows a compositional bias: polar residues; that stretch reads NLPSLTSHPNSSTF. A compositionally biased stretch (basic and acidic residues) spans 165–183; sequence EGVSKDDAEDAKKQLEDAG.

Component of the chloroplast large ribosomal subunit (LSU). Mature 70S chloroplast ribosomes of higher plants consist of a small (30S) and a large (50S) subunit. The 30S small subunit contains 1 molecule of ribosomal RNA (16S rRNA) and 24 different proteins. The 50S large subunit contains 3 rRNA molecules (23S, 5S and 4.5S rRNA) and 33 different proteins.

It localises to the plastid. It is found in the chloroplast. Component of the chloroplast ribosome (chloro-ribosome), a dedicated translation machinery responsible for the synthesis of chloroplast genome-encoded proteins, including proteins of the transcription and translation machinery and components of the photosynthetic apparatus. The polypeptide is Large ribosomal subunit protein bL12c (RPL12) (Spinacia oleracea (Spinach)).